The following is a 311-amino-acid chain: MSNSIVIQTNSTVIEDMKQQYKHSLSPKTPQGGIFMAKVPSCTITAYKSGKVMFQGGRAEAEASRWQTVSQTPKTAVKKSVDSHRYAPPASIGTMSIVGSDEVGTGDFFGPMTVVAVYVDAKQIPLLKELGVKDSKNLNDDQITAIAKQLLHVVPYSSLVLHNEKYNELFDKGNNQGKLKALLHNKAITNLLAKMAPTKPEGVLIDQFTQPDTYYKYLAKQKQVQRENVYFATKGESVHLAVAAASILARYSFVKQFDELSKKAGMPLPKGAGKQVDIAAAKLIQKLGKERLPEFVKLHFANTEKALRLLR.

The RNase H type-2 domain maps to 95–311 (MSIVGSDEVG…NTEKALRLLR (217 aa)). The a divalent metal cation site is built by Asp101, Glu102, and Asp206.

This sequence belongs to the RNase HII family. RnhC subfamily. Requires Mn(2+) as cofactor. Mg(2+) serves as cofactor.

The protein resides in the cytoplasm. It carries out the reaction Endonucleolytic cleavage to 5'-phosphomonoester.. Endonuclease that specifically degrades the RNA of RNA-DNA hybrids. The polypeptide is Ribonuclease HIII (Bacillus cereus (strain ATCC 14579 / DSM 31 / CCUG 7414 / JCM 2152 / NBRC 15305 / NCIMB 9373 / NCTC 2599 / NRRL B-3711)).